The primary structure comprises 59 residues: Large ribosomal subunit protein bL32 (59 aa).

Residues 1–15 (MANPKRKQSKRRSAN) are compositionally biased toward basic residues. The segment at 1–48 (MANPKRKQSKRRSANRRAANAFIAPEFAKDPTDGSAFRPHRVNPKNGM) is disordered.

It belongs to the bacterial ribosomal protein bL32 family.

The chain is Large ribosomal subunit protein bL32 from Opitutus terrae (strain DSM 11246 / JCM 15787 / PB90-1).